Reading from the N-terminus, the 159-residue chain is Large ribosomal subunit protein uL15 (159 aa).

Positions 21 to 34 (LRPAPGAHKSKIRV) are enriched in basic residues. Residues 21–55 (LRPAPGAHKSKIRVGRGEGSKGKTAGRGTKGSKAR) are disordered.

This sequence belongs to the universal ribosomal protein uL15 family. As to quaternary structure, part of the 50S ribosomal subunit.

Binds to the 23S rRNA. This is Large ribosomal subunit protein uL15 from Frankia casuarinae (strain DSM 45818 / CECT 9043 / HFP020203 / CcI3).